A 421-amino-acid polypeptide reads, in one-letter code: Phosphoribosylamine--glycine ligase (421 aa).

The ATP-grasp domain maps to 108-314 (KEIMVKYNVP…FAQNIDDIMM (207 aa)). Position 134 to 195 (134 to 195 (IEEQGAPIVV…EEFLDGEEFS (62 aa))) interacts with ATP. Mg(2+) contacts are provided by Glu-284 and Asn-286.

The protein belongs to the GARS family. Mg(2+) serves as cofactor. Mn(2+) is required as a cofactor.

It catalyses the reaction 5-phospho-beta-D-ribosylamine + glycine + ATP = N(1)-(5-phospho-beta-D-ribosyl)glycinamide + ADP + phosphate + H(+). Its pathway is purine metabolism; IMP biosynthesis via de novo pathway; N(1)-(5-phospho-D-ribosyl)glycinamide from 5-phospho-alpha-D-ribose 1-diphosphate: step 2/2. In Streptococcus pyogenes serotype M3 (strain SSI-1), this protein is Phosphoribosylamine--glycine ligase.